The sequence spans 596 residues: Choline dehydrogenase, mitochondrial (596 aa).

The transit peptide at 1 to 34 directs the protein to the mitochondrion; sequence MWQVLRGWRKGWQSPRGALAWAVQGQPCPPCSRA. Position 44-73 (44-73) interacts with FAD; that stretch reads TFVVVGAGSAGCVLASRLTEDPNHRVLLLE. Lysine 438 is modified (N6-succinyllysine). N6-acetyllysine; alternate occurs at positions 486 and 498. An N6-succinyllysine; alternate mark is found at lysine 486 and lysine 498. Histidine 513 functions as the Proton acceptor in the catalytic mechanism. N6-acetyllysine is present on lysine 582.

This sequence belongs to the GMC oxidoreductase family. FAD serves as cofactor. In terms of processing, acetylation of Lys-498 is observed in liver mitochondria from fasted mice but not from fed mice.

It is found in the mitochondrion inner membrane. The catalysed reaction is choline + A = betaine aldehyde + AH2. The protein operates within amine and polyamine biosynthesis; betaine biosynthesis via choline pathway; betaine aldehyde from choline (cytochrome c reductase route): step 1/1. In Mus musculus (Mouse), this protein is Choline dehydrogenase, mitochondrial (Chdh).